Reading from the N-terminus, the 497-residue chain is Putative diacyglycerol O-acyltransferase Rv3480c (497 aa).

The active-site Proton acceptor is H143.

Belongs to the long-chain O-acyltransferase family.

The catalysed reaction is an acyl-CoA + a 1,2-diacyl-sn-glycerol = a triacyl-sn-glycerol + CoA. It catalyses the reaction di-(9Z)-octadecenoylglycerol + (9Z)-octadecenoyl-CoA = 1,2,3-tri-(9Z-octadecenoyl)-glycerol + CoA. It carries out the reaction hexadecan-1-ol + hexadecanoyl-CoA = hexadecanyl hexadecanoate + CoA. It participates in glycerolipid metabolism; triacylglycerol biosynthesis. Upon expression in E.coli has a weak triacylglycerol synthase function, making triacylglycerol (TG) from diolein and long-chain fatty acyl-CoA. Also functions weakly as a wax synthase, as it incorporates palmityl alcohol into wax esters in the presence of palmitoyl-CoA. This Mycobacterium tuberculosis (strain ATCC 25618 / H37Rv) protein is Putative diacyglycerol O-acyltransferase Rv3480c.